We begin with the raw amino-acid sequence, 652 residues long: Sodium-dependent nutrient amino acid transporter 1 (652 aa).

A disordered region spans residues 1 to 54 (MELKGVHQQNGTSNGTGAVGAEGESAPPTAPATAEAAASLETTTEKVDAEQQKP). At 1 to 58 (MELKGVHQQNGTSNGTGAVGAEGESAPPTAPATAEAAASLETTTEKVDAEQQKPERTN) the chain is on the cytoplasmic side. Residues 7–16 (HQQNGTSNGT) are compositionally biased toward polar residues. Residues 21–42 (AEGESAPPTAPATAEAAASLET) are compositionally biased toward low complexity. Basic and acidic residues predominate over residues 43-54 (TTEKVDAEQQKP). 4 helical membrane passes run 59 to 79 (WGNG…LGNV), 92 to 112 (GAFL…MYYL), 130 to 150 (VVPG…CIIT), and 155 to 175 (LLAL…PWSY). Asparagine 201 and asparagine 204 each carry an N-linked (GlcNAc...) asparagine glycan. Transmembrane regions (helical) follow at residues 240-260 (PDWK…LVIM), 269-289 (AAYF…VRAV), 318-338 (AVVQ…MFAS), 352-372 (IVTT…FAIL), 412-432 (LFSV…IVAL), 458-478 (ICGF…ILTL), 485-505 (TYVV…IYGM), 527-547 (CWSF…MVTI), and 564-584 (AGWL…MWYI).

Belongs to the sodium:neurotransmitter symporter (SNF) (TC 2.A.22) family.

It is found in the membrane. Its function is as follows. Unusual broad substrate spectrum amino acid:sodium cotransporter that promotes absorption of the D isomers of essential amino acids. Neutral amino acids are the preferred substrates, especially methionine and phenylalanine. In Drosophila persimilis (Fruit fly), this protein is Sodium-dependent nutrient amino acid transporter 1.